Consider the following 593-residue polypeptide: Translation initiation factor rli1 (593 aa).

4Fe-4S ferredoxin-type domains lie at 7-39 (RIAIVSEDKCRPKKCRQECRRSCPVVRTGKLCI) and 46-75 (RIAFISETLCIGCGICVKKCPFGAINIINL). ABC transporter domains follow at residues 70–318 (INII…FLDG) and 334–556 (FRLA…LKNL). ATP contacts are provided by residues 110-117 (GTNGIGKS) and 382-389 (GENGTGKT).

This sequence belongs to the ABC transporter superfamily. As to quaternary structure, component of the multifactor complex (MFC). The complex associates with pre-initiation complexes.

It is found in the cytoplasm. The protein resides in the nucleus. In terms of biological role, component of the multifactor complex (MFC) involved in translation initiation. Required for the binding of MFC to the 40S ribosome. Required for the processing and nuclear export of the 60S and 40S ribosomal subunits. This Schizosaccharomyces pombe (strain 972 / ATCC 24843) (Fission yeast) protein is Translation initiation factor rli1 (rli1).